The chain runs to 104 residues: Large ribosomal subunit protein uL24 (104 aa).

The protein belongs to the universal ribosomal protein uL24 family. In terms of assembly, part of the 50S ribosomal subunit.

Its function is as follows. One of two assembly initiator proteins, it binds directly to the 5'-end of the 23S rRNA, where it nucleates assembly of the 50S subunit. Functionally, one of the proteins that surrounds the polypeptide exit tunnel on the outside of the subunit. The sequence is that of Large ribosomal subunit protein uL24 from Mesorhizobium japonicum (strain LMG 29417 / CECT 9101 / MAFF 303099) (Mesorhizobium loti (strain MAFF 303099)).